Reading from the N-terminus, the 405-residue chain is MIQWFLKYRPRSLKDVENQDGAKKELQEWIESWLNGKPNAKAVLLHGPPGVGKTTLAEALAHDYNLELLEMNASDSRKLQDIKGVAEKASVYGSIFGTRGKLILLDEVDGINVREDTGAIQGILELIEKTKYPIIMTANDPWNPALRELRNKTKMVGLNKLGKYPLRRLLKKICQAEKIICDDEALNYIIDTSEGDARYAINMLQGIGEGYGKVTLDLVEAMARRKERELDPFETLRDIFWARYAWQAKNAATSAQIDYDMLIRWISENIPIQYDNIEDVWRAFDALSRASIFLKRAKGGDWDLLSYAYDLMSSGVAAAEIEKKKPNWKPKWKKYQFPSYIQLLSKSKDIRDTRDEIIKKLAIHSSFNKTLNDTYPFFLIFYKKYDKRLSLNTKEKEYLNSASKS.

47-54 (GPPGVGKT) is an ATP binding site.

Belongs to the activator 1 small subunits family. RfcL subfamily. In terms of assembly, heteromultimer composed of small subunits (RfcS) and large subunits (RfcL).

Part of the RFC clamp loader complex which loads the PCNA sliding clamp onto DNA. The protein is Replication factor C large subunit of Saccharolobus islandicus (strain L.S.2.15 / Lassen #1) (Sulfolobus islandicus).